The chain runs to 539 residues: Beta-apo-4'-carotenal oxygenase (539 aa).

Active-site residues include E228 and C262.

Belongs to the aldehyde dehydrogenase family.

It catalyses the reaction 4'-apo-beta-carotenal + NAD(+) + H2O = neurosporaxanthin + NADH + 2 H(+). Its function is as follows. Beta-apo-4'-carotenal oxygenase involved in the last step of synthesis of neurosporaxanthin, a carboxylic apocarotenoid acting as an essential protective pigments and leading to orange pigmentation. Converts the aldehyde beta-apo-4'-carotenal into neurosporaxanthin. Is also able to use shorter apocarotenals as substrates (such as beta-apo-8'-carotenal (C30), beta-apo-10'-carotenal (C27), or the acyclic apocarotenal apo-8'-lycopenal (C30)), indicating wide substrate specificity. Neurosporaxanthin is synthesized from geranyl-geranyl pyrophosphate (GGPP) through several enzymatic activities. Phytoene synthase activity performed by the bifunctional enzyme carAR first produces phytoene from geranyl-geranyl pyrophosphate (GGPP). The phytoene dehydrogenase carB then introduces 4 desaturations to lead to lycopene which is substrate of the carotene cyclase activity of carAR that leads to the production of gamma-carotene. CarB then performs a 5th desaturation reaction to yield torulene. Torulene is the substrate of the dioxidase carT that breaks the molecule, removing five carbon atoms to yield beta-apo-4'-carotenal, whereas the aldehyde dehydrogenase carD mediates the last step by converting beta-apo-4'-carotenal into neurosporaxanthin. This is Beta-apo-4'-carotenal oxygenase from Gibberella fujikuroi (strain CBS 195.34 / IMI 58289 / NRRL A-6831) (Bakanae and foot rot disease fungus).